A 136-amino-acid chain; its full sequence is Large ribosomal subunit protein uL22 (136 aa).

It belongs to the universal ribosomal protein uL22 family. As to quaternary structure, part of the 50S ribosomal subunit.

Functionally, this protein binds specifically to 23S rRNA; its binding is stimulated by other ribosomal proteins, e.g. L4, L17, and L20. It is important during the early stages of 50S assembly. It makes multiple contacts with different domains of the 23S rRNA in the assembled 50S subunit and ribosome. The globular domain of the protein is located near the polypeptide exit tunnel on the outside of the subunit, while an extended beta-hairpin is found that lines the wall of the exit tunnel in the center of the 70S ribosome. The chain is Large ribosomal subunit protein uL22 from Parabacteroides distasonis (strain ATCC 8503 / DSM 20701 / CIP 104284 / JCM 5825 / NCTC 11152).